The following is a 529-amino-acid chain: 56 kDa type-specific antigen (529 aa).

The first 22 residues, 1 to 22 (MKKIMLIASAMSALSLPFSASA), serve as a signal peptide directing secretion. Residues 67-87 (LTTSMPFGGTLAAGMTIAPGF) traverse the membrane as a helical segment. Residues 106–116 (GKTGSDADIRS) show a composition bias toward basic and acidic residues. Disordered stretches follow at residues 106-134 (GKTGSDADIRSGADSPMPQRYKLTPPQPT) and 392-424 (DGGCNGGGDNKKKRGASEDSDAGGASKGGKGKE). The helical transmembrane segment at 477–492 (TGMVASGALGVAINAA) threads the bilayer.

The protein localises to the cell membrane. May be an adherent factor for rickettsial adsorption to the host-cell surface and a determinant of virulence of individual rickettsial strain. It is the major outer membrane protein. This is 56 kDa type-specific antigen from Orientia tsutsugamushi (Rickettsia tsutsugamushi).